Here is a 325-residue protein sequence, read N- to C-terminus: 8-oxo-dGDP phosphatase NUDT18 (325 aa).

Positions 38–163 (NVCYIVGAVI…DILSLIDAGL (126 aa)) constitute a Nudix hydrolase domain. Leu55 is a binding site for Mg(2+). The Nudix box motif lies at 73–94 (GRMEECESILEALQREVREEAG).

Belongs to the Nudix hydrolase family. It depends on Mn(2+) as a cofactor. The cofactor is Mg(2+).

The catalysed reaction is 8-oxo-dGDP + H2O = 8-oxo-dGMP + phosphate + H(+). It carries out the reaction 8-oxo-dADP + H2O = 8-oxo-dAMP + phosphate + H(+). The enzyme catalyses 2-oxo-dADP + H2O = 2-oxo-dAMP + phosphate + H(+). It catalyses the reaction 8-oxo-GDP + H2O = 8-oxo-GMP + phosphate + H(+). Functionally, mediates the hydrolysis of oxidized nucleoside diphosphate derivatives. Hydrolyzes 8-oxo-7,8-dihydroguanine (8-oxo-Gua)-containing deoxyribo- and ribonucleoside diphosphates to the monophosphates. Hydrolyzes 8-oxo-dGDP and 8-oxo-GDP with the same efficiencies. Also hydrolyzes 8-OH-dADP and 2-OH-dADP. Exhibited no or minimal hydrolysis activity against 8-oxo-dGTP, 8-oxo-GTP, dGTP, GTP, dGDP and GDP. Probably removes oxidized guanine nucleotides from both the DNA and RNA precursor pools. In Danio rerio (Zebrafish), this protein is 8-oxo-dGDP phosphatase NUDT18 (nudt18).